A 417-amino-acid chain; its full sequence is NADH-quinone oxidoreductase subunit D (417 aa).

This sequence belongs to the complex I 49 kDa subunit family. As to quaternary structure, NDH-1 is composed of 14 different subunits. Subunits NuoB, C, D, E, F, and G constitute the peripheral sector of the complex.

It is found in the cell membrane. It catalyses the reaction a quinone + NADH + 5 H(+)(in) = a quinol + NAD(+) + 4 H(+)(out). In terms of biological role, NDH-1 shuttles electrons from NADH, via FMN and iron-sulfur (Fe-S) centers, to quinones in the respiratory chain. The immediate electron acceptor for the enzyme in this species is believed to be ubiquinone. Couples the redox reaction to proton translocation (for every two electrons transferred, four hydrogen ions are translocated across the cytoplasmic membrane), and thus conserves the redox energy in a proton gradient. The sequence is that of NADH-quinone oxidoreductase subunit D from Polynucleobacter asymbioticus (strain DSM 18221 / CIP 109841 / QLW-P1DMWA-1) (Polynucleobacter necessarius subsp. asymbioticus).